The primary structure comprises 458 residues: Ammonium transporter Rh type B (458 aa).

Residues 1–13 (MAGSSRRAGGRRL) lie on the Cytoplasmic side of the membrane. Residues 14–34 (QLPLLCLLLQGATAILFAVFV) traverse the membrane as a helical segment. The Extracellular portion of the chain corresponds to 35–61 (RYNHETDAALWHWGNHSNPDNEFYFRY). N-linked (GlcNAc...) asparagine glycosylation occurs at Asn49. Residues 62–82 (PSFQDVHTMIFVGFGFLMAFL) traverse the membrane as a helical segment. Topologically, residues 83 to 86 (QRYG) are cytoplasmic. Residues 87–107 (FSSVGFTFLLAAFALQWSTLV) form a helical membrane-spanning segment. Residues 108 to 124 (QGFLHTFHGGHIHIGVE) are Extracellular-facing. A helical transmembrane segment spans residues 125 to 145 (SMINADFCAGAVLISFGAILG). Topologically, residues 146 to 149 (KTGP) are cytoplasmic. Residues 150–170 (AQLLLMALLEVVLFGLNEFVL) form a helical membrane-spanning segment. The Extracellular portion of the chain corresponds to 171–178 (LSLLGVKD). Residues 179 to 201 (AGGSMTIHTFGAYFGLVLSRVLY) traverse the membrane as a helical segment. Residues 202 to 219 (RPQLEKSKHRQSSVYHSD) lie on the Cytoplasmic side of the membrane. The chain crosses the membrane as a helical span at residues 220–240 (LFAMIGTIFLWIFWPSFNSAP). Residues 241 to 251 (TPLGDGQHRTA) lie on the Extracellular side of the membrane. Residues 252-272 (LNTYYSLTASTLSTFALSALV) traverse the membrane as a helical segment. At 273–282 (GRDGRLDMVH) the chain is on the cytoplasmic side. The chain crosses the membrane as a helical span at residues 283–303 (VQNAALAGGVVVGTSAEMMLT). Residue Pro304 is a topological domain, extracellular. The helical transmembrane segment at 305–325 (FGALAAGFLAGTVSTLGFKFF) threads the bilayer. At 326–346 (TPILESKFKIQDTCGVHNLHG) the chain is on the cytoplasmic side. A helical transmembrane segment spans residues 347–367 (MPGVLGALLGVLVAGLATHDS). Over 368-393 (YGEGLESVFPLIAEGQRSSTSQALHQ) the chain is Extracellular. The chain crosses the membrane as a helical span at residues 394–414 (LFGLFVTLIFASVGGGLGGLL). At 415–458 (LRLPFLDSPPDSQCYEDQIYWEVPEEHADLAQGSLRPEEPDTQA) the chain is on the cytoplasmic side. The interval 416–424 (RLPFLDSPP) is interaction with ANK3. Residues 429 to 432 (YEDQ) carry the Basolateral sorting signal motif.

It belongs to the ammonium transporter (TC 2.A.49) family. Rh subfamily. As to quaternary structure, interacts (via C-terminus) with ANK2 and ANK3; required for targeting to the basolateral membrane. N-glycosylated.

The protein resides in the cell membrane. It localises to the basolateral cell membrane. The enzyme catalyses NH4(+)(in) = NH4(+)(out). The catalysed reaction is methylamine(out) = methylamine(in). It catalyses the reaction CO2(out) = CO2(in). In terms of biological role, ammonium transporter involved in the maintenance of acid-base homeostasis. Transports ammonium and its related derivative methylammonium across the basolateral plasma membrane of epithelial cells likely contributing to renal transepithelial ammonia transport and ammonia metabolism. May transport either NH4(+) or NH3 ammonia species predominantly mediating an electrogenic NH4(+) transport. May act as a CO2 channel providing for renal acid secretion. The chain is Ammonium transporter Rh type B (RHBG) from Sus scrofa (Pig).